We begin with the raw amino-acid sequence, 540 residues long: MLO protein homolog 1 (540 aa).

At 1-16 the chain is on the extracellular side; sequence MAGGRSGSRELPETPT. Residues 17–37 traverse the membrane as a helical segment; that stretch reads WAVAVVCAVLVLVSAAMEHGL. Over 38–60 the chain is Cytoplasmic; it reads HNLSHWFRRRQKKAMGDALDKIK. The helical transmembrane segment at 61–81 threads the bilayer; that stretch reads AELMLLGFISLLLTVAQAPIS. Residues 82–142 lie on the Extracellular side of the membrane; the sequence is KICIPKSAAN…MSAKSMHQLH (61 aa). The helical transmembrane segment at 143–163 threads the bilayer; that stretch reads IFIFVLAVFHVTYCIITMGLG. The Cytoplasmic portion of the chain corresponds to 164–265; sequence RLKMKKWKKW…IKRSLEDDFK (102 aa). The helical transmembrane segment at 266–286 threads the bilayer; sequence VVVGISLPLWFVGILVLFLDI. Residue His-287 is a topological domain, extracellular. A helical transmembrane segment spans residues 288 to 308; sequence GLGTLIWISFVPLIIVLLVGT. The Cytoplasmic portion of the chain corresponds to 309 to 347; it reads KLEMVIMEMAQEIQDRATVIQGAPMVEPSNKYFWFNRPD. A helical membrane pass occupies residues 348–368; sequence WVLFFIHLTLFHNAFQMAHFV. Residues 369–383 lie on the Extracellular side of the membrane; sequence WTMATPGLKKCFHEN. Residues 384 to 404 form a helical membrane-spanning segment; the sequence is IWLSIVEVIVGISLQVLCSYI. The Cytoplasmic segment spans residues 405–540; it reads TFPLYALVTQ…DSDFSFSAQR (136 aa). Residues 426 to 447 form a calmodulin-binding region; that stretch reads EQTMKALMNWRKKAMEKKKVRD. The tract at residues 468-526 is disordered; it reads ASPVHLLQDHRARSDDPPSPITVASPPAPEEDMYPVPAAAASRQLLDDPPDRRWMASSS. Composition is skewed to basic and acidic residues over residues 474-483 and 512-521; these read LQDHRARSDD and LLDDPPDRRW.

It belongs to the MLO family.

Its subcellular location is the membrane. Functionally, may be involved in modulation of pathogen defense and leaf cell death. Activity seems to be regulated by Ca(2+)-dependent calmodulin binding and seems not to require heterotrimeric G proteins. This is MLO protein homolog 1 (MLO1) from Oryza sativa subsp. indica (Rice).